We begin with the raw amino-acid sequence, 822 residues long: Lysine-specific histone demethylase 2 (822 aa).

Positions 1–11 are enriched in basic residues; sequence MATPRGRTKKK. Positions 1 to 47 are disordered; that stretch reads MATPRGRTKKKASFDHSPDSLPLRSSGRQAKKKATETTDEDEDGGSE. Phosphoserine is present on residues serine 13, serine 17, and serine 26. Residues cysteine 53, cysteine 58, cysteine 65, cysteine 73, histidine 84, histidine 90, cysteine 92, cysteine 95, cysteine 142, cysteine 147, cysteine 169, and cysteine 185 each coordinate Zn(2+). A CW-type zinc finger spans residues 133–193; the sequence is DQQLPYWVQC…HCSLPEDLRV (61 aa). Serine 247 carries the post-translational modification Phosphoserine. The GLYR1-binding stretch occupies residues 273–292; it reads YQPNECGKALCVRPDVMELD. An SWIRM domain is found at 275 to 373; that stretch reads PNECGKALCV…TGVLSVGADQ (99 aa). Position 383 to 439 (383 to 439) interacts with FAD; it reads KSVIIIGAGPAGLAAARQLHNFGIKVTVLEAKDRIGGRVWDDKSFKGVTVGRGAQIV. Histone H3-binding stretches follow at residues 438-467, 487-498, and 538-572; these read IVNG…RCDL, FNALLDVVSEWR, and FHLS…AGDH. The GLYR1-binding stretch occupies residues 564–566; that stretch reads FFA. Residues valine 598, glutamate 795, and 803–805 contribute to the FAD site; that span reads QTV. The interval 798–814 is GLYR1-binding; that stretch reads NRHFPQTVTGAYLSGVR.

The protein belongs to the flavin monoamine oxidase family. Interacts with its cofactor GLYR1 at nucleosomes; this interaction stimulates H3K4me1 and H3K4me2 demethylation. In contrast to KDM1A, does not form a complex with RCOR1/CoREST. Possible accessory component of the polycomb repressive deubiquitinase (PR-DUB) complex, at least composed of BAP1, one of ASXL1, ASXL2 or (probably) ASXL3 and one of MBD5 or MBD6. The PR-DUB core associates with a number of accessory proteins, including FOXK1, FOXK2, KDM1B, HCFC1 and OGT; KDM1B specifically associates with ASXL2 PR-DUB complexes. The cofactor is FAD. It depends on Zn(2+) as a cofactor.

The protein localises to the nucleus. It is found in the chromosome. It catalyses the reaction N(6),N(6)-dimethyl-L-lysyl(4)-[histone H3] + 2 A + 2 H2O = L-lysyl(4)-[histone H3] + 2 formaldehyde + 2 AH2. The catalysed reaction is N(6)-methyl-L-lysyl(4)-[histone H3] + A + H2O = L-lysyl(4)-[histone H3] + formaldehyde + AH2. Its activity is regulated as follows. Histone H3K4me1 and H3K4me2 demethylase activity is inhibited by DNA, this inhibition is released in complex with GLYR1. Functionally, histone demethylase that demethylates 'Lys-4' of histone H3, a specific tag for epigenetic transcriptional activation, thereby acting as a corepressor. Required for de novo DNA methylation of a subset of imprinted genes during oogenesis. Acts by oxidizing the substrate by FAD to generate the corresponding imine that is subsequently hydrolyzed. Demethylates both mono- and di-methylated 'Lys-4' of histone H3. Has no effect on tri-methylated 'Lys-4', mono-, di- or tri-methylated 'Lys-9', mono-, di- or tri-methylated 'Lys-27', mono-, di- or tri-methylated 'Lys-36' of histone H3, or on mono-, di- or tri-methylated 'Lys-20' of histone H4. Alone, it is unable to demethylate H3K4me on nucleosomes and requires the presence of GLYR1 to achieve such activity, they form a multifunctional enzyme complex that modifies transcribed chromatin and facilitates Pol II transcription through nucleosomes. In Homo sapiens (Human), this protein is Lysine-specific histone demethylase 2.